A 168-amino-acid polypeptide reads, in one-letter code: Large ribosomal subunit protein uL10 (168 aa).

The protein belongs to the universal ribosomal protein uL10 family. Part of the ribosomal stalk of the 50S ribosomal subunit. The N-terminus interacts with L11 and the large rRNA to form the base of the stalk. The C-terminus forms an elongated spine to which L12 dimers bind in a sequential fashion forming a multimeric L10(L12)X complex.

In terms of biological role, forms part of the ribosomal stalk, playing a central role in the interaction of the ribosome with GTP-bound translation factors. The protein is Large ribosomal subunit protein uL10 (rplJ) of Buchnera aphidicola subsp. Baizongia pistaciae (strain Bp).